The following is a 76-amino-acid chain: Large ribosomal subunit protein eL20 (76 aa).

The protein belongs to the eukaryotic ribosomal protein eL20 family. As to quaternary structure, part of the 50S ribosomal subunit. Binds 23S rRNA.

The sequence is that of Large ribosomal subunit protein eL20 from Methanococcus maripaludis (strain C7 / ATCC BAA-1331).